The chain runs to 552 residues: Putative E3 ubiquitin-protein ligase ARI6 (552 aa).

The interval 129–343 (REFTCGICFE…GGYYACNRYE (215 aa)) is TRIAD supradomain. Zn(2+) contacts are provided by C133, C136, C150, H152, C155, C158, C178, C183, C222, C227, C245, C247, C252, C255, H260, C265, C292, and C295. Residues 133-183 (CGICFESYPLEETISVSCGHPFCATCWTGYISTSINDGPGCLMLKCPYPCC) form an RING-type 1 zinc finger. The segment at 202 to 265 (ERYYRYFLRS…SEEAHRPVDC (64 aa)) adopts an IBR-type zinc-finger fold. The segment at 292–322 (CPKCKRPIEKNHGCMHMTCTPPCKFEFCWLC) adopts an RING-type 2; atypical zinc-finger fold. Residue C305 is part of the active site. Zn(2+)-binding residues include C310, C314, C319, C322, H329, and C339. A disordered region spans residues 518 to 552 (HAASSKPANCKPSSNTKDGGKGKKEALTMAGSAET). The segment covering 519–534 (AASSKPANCKPSSNTK) has biased composition (polar residues).

It belongs to the RBR family. Ariadne subfamily. It depends on Zn(2+) as a cofactor.

It catalyses the reaction [E2 ubiquitin-conjugating enzyme]-S-ubiquitinyl-L-cysteine + [acceptor protein]-L-lysine = [E2 ubiquitin-conjugating enzyme]-L-cysteine + [acceptor protein]-N(6)-ubiquitinyl-L-lysine.. Its pathway is protein modification; protein ubiquitination. Functionally, might act as an E3 ubiquitin-protein ligase, or as part of E3 complex, which accepts ubiquitin from specific E2 ubiquitin-conjugating enzymes and then transfers it to substrates. This is Putative E3 ubiquitin-protein ligase ARI6 (ARI6) from Arabidopsis thaliana (Mouse-ear cress).